The chain runs to 142 residues: VapC ribonuclease R02377 (142 aa).

The 138-residue stretch at 3-140 (FVDGSVIVAI…YKGNDFSQTD (138 aa)) folds into the PINc domain. Mg(2+) contacts are provided by Asp5 and Asp115.

This sequence belongs to the PINc/VapC protein family. Requires Mg(2+) as cofactor.

In terms of biological role, toxic component of a type II toxin-antitoxin (TA) system. An RNase. In Rhizobium meliloti (strain 1021) (Ensifer meliloti), this protein is VapC ribonuclease R02377.